The chain runs to 961 residues: Roundabout homolog 4 (961 aa).

Positions 1 to 37 (MGQGEELRAAVDSGGMGLLGTKCPLPLLLLFIMGGKA) are cleaved as a signal peptide. 2 consecutive Ig-like C2-type domains span residues 42–142 (PQIL…ARLS) and 148–235 (EDFR…ARVS). 2 cysteine pairs are disulfide-bonded: Cys63-Cys125 and Cys169-Cys218. N-linked (GlcNAc...) asparagine glycans are attached at residues Asn211 and Asn257. Fibronectin type-III domains lie at 259-356 (TLLN…LPEQ) and 358-453 (PSAP…LEQA). N-linked (GlcNAc...) asparagine glycans are attached at residues Asn371, Asn400, and Asn407. Residues 544-559 (SGSRDLSSSSSLSSRL) are compositionally biased toward low complexity. Disordered regions lie at residues 544 to 563 (SGSRDLSSSSSLSSRLGVDP) and 600 to 634 (QTSSPPVRPSPQTPAARRLPPKLTGTSSPWASSDS). A compositionally biased stretch (polar residues) spans 623-634 (TGTSSPWASSDS). N-linked (GlcNAc...) asparagine glycans are attached at residues Asn691 and Asn723. Residues 726 to 810 (ELAARPLPPT…SLEEEDQDSV (85 aa)) form a disordered region. The span at 755–769 (LQAPSSDPLPAAPLS) shows a compositional bias: low complexity. The span at 770-783 (VLNSSRPSSPQASF) shows a compositional bias: polar residues. N-linked (GlcNAc...) asparagine glycosylation is found at Asn772 and Asn793. Low complexity predominate over residues 784–801 (LSVPSPGSSNLSSSSLSS). Ser823 carries the phosphoserine modification.

It belongs to the immunoglobulin superfamily. ROBO family. As to quaternary structure, interacts with SLIT2 and ENAH.

Functionally, receptor for Slit proteins, at least for SLIT2, and seems to be involved in angiogenesis and vascular patterning. May mediate the inhibition of primary endothelial cell migration by Slit proteins. Involved in the maintenance of endothelial barrier organization and function. The sequence is that of Roundabout homolog 4 (Robo4) from Rattus norvegicus (Rat).